The chain runs to 193 residues: Holliday junction branch migration complex subunit RuvA (193 aa).

The segment at 1–64 (MIGRIAGTLI…EDAHLLYGFG (64 aa)) is domain I. A domain II region spans residues 65-143 (SAAERNTFRE…AELGHAPGAA (79 aa)). Residues 144-151 (PVHDSAVD) form a flexible linker region. The tract at residues 151–193 (DILNALLALGYSEKEAATAIKQVPAGTGVSDGIKLALKALSKA) is domain III.

The protein belongs to the RuvA family. Homotetramer. Forms an RuvA(8)-RuvB(12)-Holliday junction (HJ) complex. HJ DNA is sandwiched between 2 RuvA tetramers; dsDNA enters through RuvA and exits via RuvB. An RuvB hexamer assembles on each DNA strand where it exits the tetramer. Each RuvB hexamer is contacted by two RuvA subunits (via domain III) on 2 adjacent RuvB subunits; this complex drives branch migration. In the full resolvosome a probable DNA-RuvA(4)-RuvB(12)-RuvC(2) complex forms which resolves the HJ.

The protein localises to the cytoplasm. The RuvA-RuvB-RuvC complex processes Holliday junction (HJ) DNA during genetic recombination and DNA repair, while the RuvA-RuvB complex plays an important role in the rescue of blocked DNA replication forks via replication fork reversal (RFR). RuvA specifically binds to HJ cruciform DNA, conferring on it an open structure. The RuvB hexamer acts as an ATP-dependent pump, pulling dsDNA into and through the RuvAB complex. HJ branch migration allows RuvC to scan DNA until it finds its consensus sequence, where it cleaves and resolves the cruciform DNA. The polypeptide is Holliday junction branch migration complex subunit RuvA (Cupriavidus pinatubonensis (strain JMP 134 / LMG 1197) (Cupriavidus necator (strain JMP 134))).